The sequence spans 151 residues: UPF0178 protein Caul_3070 (151 aa).

Belongs to the UPF0178 family.

The sequence is that of UPF0178 protein Caul_3070 from Caulobacter sp. (strain K31).